We begin with the raw amino-acid sequence, 383 residues long: Erythronate-4-phosphate dehydrogenase (383 aa).

Positions 45 and 66 each coordinate substrate. Residues aspartate 146, threonine 174, 205–207 (ASR), and aspartate 231 each bind NAD(+). The active site involves arginine 207. Glutamate 236 is an active-site residue. Histidine 253 (proton donor) is an active-site residue. Residue glycine 256 coordinates NAD(+). A substrate-binding site is contributed by tyrosine 257.

Belongs to the D-isomer specific 2-hydroxyacid dehydrogenase family. PdxB subfamily. As to quaternary structure, homodimer.

The protein localises to the cytoplasm. It catalyses the reaction 4-phospho-D-erythronate + NAD(+) = (R)-3-hydroxy-2-oxo-4-phosphooxybutanoate + NADH + H(+). It participates in cofactor biosynthesis; pyridoxine 5'-phosphate biosynthesis; pyridoxine 5'-phosphate from D-erythrose 4-phosphate: step 2/5. In terms of biological role, catalyzes the oxidation of erythronate-4-phosphate to 3-hydroxy-2-oxo-4-phosphonooxybutanoate. The chain is Erythronate-4-phosphate dehydrogenase from Pseudomonas entomophila (strain L48).